A 138-amino-acid polypeptide reads, in one-letter code: MRTLWIMAVLQVGVEGHLMQFETLIMKVAGRSGVWYYGSYGCFCGAGGQGRPQDASDRCCFVHDCCYGKVNGCDPKKDFYTYSEENGAIVCGGDDPCKKEICECDKDAAICFRDNKDTYDNKYWFFPAKNCQEESEPC.

An N-terminal signal peptide occupies residues 1 to 16; the sequence is MRTLWIMAVLQVGVEG. 7 disulfides stabilise this stretch: cysteine 42–cysteine 131, cysteine 44–cysteine 60, cysteine 59–cysteine 111, cysteine 65–cysteine 138, cysteine 66–cysteine 104, cysteine 73–cysteine 97, and cysteine 91–cysteine 102. Residues phenylalanine 43, glycine 45, and glycine 47 each coordinate Ca(2+). Histidine 63 is an active-site residue. Aspartate 64 lines the Ca(2+) pocket. Residue aspartate 105 is part of the active site.

Ca(2+) is required as a cofactor. Expressed by the venom gland.

It localises to the secreted. The catalysed reaction is a 1,2-diacyl-sn-glycero-3-phosphocholine + H2O = a 1-acyl-sn-glycero-3-phosphocholine + a fatty acid + H(+). Its function is as follows. Snake venom phospholipase A2 (PLA2) that shows a moderate inhibition of ADP-induced human platelet aggregation when tested on platelet rich plasma. Exhibits high hydrolytic activities and prefers the anionic micelles (dPPC with deoxycholate) to the zwitterionic micelles (dPPC with Triton X-100). PLA2 catalyzes the calcium-dependent hydrolysis of the 2-acyl groups in 3-sn-phosphoglycerides. The protein is Acidic phospholipase A2 Ts-A1 of Trimeresurus stejnegeri (Chinese green tree viper).